Reading from the N-terminus, the 123-residue chain is Small ribosomal subunit protein uS13 (123 aa).

Residues 94–123 (GLPVRGQSTKSNARTRKGPRKTVAGKKSTK) are disordered. Basic residues predominate over residues 106–123 (ARTRKGPRKTVAGKKSTK).

It belongs to the universal ribosomal protein uS13 family. As to quaternary structure, part of the 30S ribosomal subunit. Forms a loose heterodimer with protein S19. Forms two bridges to the 50S subunit in the 70S ribosome.

Located at the top of the head of the 30S subunit, it contacts several helices of the 16S rRNA. In the 70S ribosome it contacts the 23S rRNA (bridge B1a) and protein L5 of the 50S subunit (bridge B1b), connecting the 2 subunits; these bridges are implicated in subunit movement. Contacts the tRNAs in the A and P-sites. The sequence is that of Small ribosomal subunit protein uS13 from Mycoplasmopsis agalactiae (strain NCTC 10123 / CIP 59.7 / PG2) (Mycoplasma agalactiae).